A 609-amino-acid chain; its full sequence is Alpha-fetoprotein (609 aa).

An N-terminal signal peptide occupies residues 1–18 (MKWVESIFLIFLLNFTES). Albumin domains are found at residues 19–210 (RTLH…ATVT), 211–402 (KELR…EELQ), and 403–601 (KYIQ…KLIS). His22 lines the Cu(2+) pocket. Cystine bridges form between Cys99–Cys114, Cys113–Cys124, Cys148–Cys193, Cys192–Cys201, Cys224–Cys270, Cys269–Cys277, Cys289–Cys303, and Cys302–Cys313. Residues Ser111, Ser115, and Ser117 each carry the phosphoserine modification. N-linked (GlcNAc...) asparagine glycosylation is present at Asn251. Ser344 is subject to Phosphoserine. Disulfide bonds link Cys384-Cys393, Cys416-Cys462, Cys461-Cys472, Cys485-Cys501, Cys500-Cys511, Cys538-Cys583, and Cys582-Cys591. Ser444 bears the Phosphoserine mark.

It belongs to the ALB/AFP/VDB family. As to quaternary structure, dimeric and trimeric forms have been found in addition to the monomeric form. In terms of processing, sulfated. As to expression, plasma.

It is found in the secreted. Its function is as follows. Binds copper, nickel, and fatty acids as well as, and bilirubin less well than, serum albumin. In Gorilla gorilla gorilla (Western lowland gorilla), this protein is Alpha-fetoprotein (AFP).